The primary structure comprises 802 residues: Osmosensitive cation channel TMEM63C (802 aa).

The Extracellular segment spans residues 1 to 35; that stretch reads MSAFPDSMDQKFHNMTVNECFQSRSTVLQGQPFGG. A helical membrane pass occupies residues 36 to 60; that stretch reads IPTVLVLNIILWVFVVLLYSFLRKA. The Cytoplasmic segment spans residues 61-124; sequence AWDYGRLALL…RDRDLINKCG (64 aa). Residues Ser75 and Ser78 each carry the phosphoserine modification. A helical transmembrane segment spans residues 125-157; it reads DDARIYITFQYHLIIFVLILCIPSLGIILPVNY. Over 158 to 180 the chain is Extracellular; the sequence is IGTVLDWNSHFGRTTIVNVSTES. A helical transmembrane segment spans residues 181-205; sequence KFLWLHSLFAFLYFLINLAFMGHHC. Residues 206–401 lie on the Cytoplasmic side of the membrane; that stretch reads LGFVPKKSLH…IIWKHLSIRR (196 aa). The chain crosses the membrane as a helical span at residues 402–431; sequence FSWWTRFIAINTFLFFLFFFLTTPAIIINT. Topologically, residues 432-446 are extracellular; it reads IDIYNVTRPIEKLQS. The helical transmembrane segment at 447-476 threads the bilayer; it reads PIVTQFFPSVLLWAFTVTMPLLVYLSAFLE. Residues 477–480 lie on the Cytoplasmic side of the membrane; sequence AHWT. The helical transmembrane segment at 481 to 517 threads the bilayer; sequence RSSQNLIIVHKCYIFLVFMVVILPSMGLTSLHVFLRW. Topologically, residues 518-540 are extracellular; it reads LFDIYYLEHATIRFQCVFLPDNG. The chain crosses the membrane as a helical span at residues 541–573; sequence AFFINYVITAALLGTGMELMRLGSLCTYCTRLF. Over 574-593 the chain is Cytoplasmic; that stretch reads LSKSEPERVHIRKNQATDFQ. The chain crosses the membrane as a helical span at residues 594–612; that stretch reads FGREYAWMLNVFSVVMAYS. The Extracellular segment spans residues 613 to 615; that stretch reads ITC. A helical membrane pass occupies residues 616–640; that stretch reads PIIVPFGLLYLCMKHITDRYNMYYS. Over 641–647 the chain is Cytoplasmic; sequence YAPTKLN. Residues 648 to 676 traverse the membrane as a helical segment; it reads AQIHMAAVYQAIFAPLLGLFWMLFFSILR. Topologically, residues 677–681 are extracellular; that stretch reads VGSLH. A helical membrane pass occupies residues 682-702; the sequence is SITLFSMSSLIISVVIAFSGV. The Cytoplasmic portion of the chain corresponds to 703-802; the sequence is FLGKLRIAQR…EGLEMEGQSH (100 aa). The disordered stretch occupies residues 753 to 785; the sequence is TPASSPARHTYGTINSQPEEGEEESGLRGFARE.

This sequence belongs to the CSC1 (TC 1.A.17) family. As to quaternary structure, monomer.

It is found in the endoplasmic reticulum membrane. The protein localises to the cell membrane. The catalysed reaction is Ca(2+)(in) = Ca(2+)(out). Its function is as follows. Acts as an osmosensitive cation channel preferentially activated upon hypotonic stress. In contrast to TMEM63B, does not show phospholipid scramblase activity. Enriched in mitochondria-ER contact sites where it may regulate the metabolite flux and organelles' morphologies in response to osmotic changes. In particular may regulate mitochondrial motility and function in motor neuron axons. Required for the functional integrity of the kidney glomerular filtration barrier. The chain is Osmosensitive cation channel TMEM63C from Mus musculus (Mouse).